We begin with the raw amino-acid sequence, 884 residues long: Valine--tRNA ligase (884 aa).

Residues 46-56 carry the 'HIGH' region motif; sequence PNVTGKLHLGH. The 'KMSKS' region motif lies at 520–524; sequence KMSKS. Lys-523 contributes to the ATP binding site. Residues 809 to 844 adopt a coiled-coil conformation; it reads LADLLNVEEELARLEKELAKWQKELNMVGKKLSNER.

The protein belongs to the class-I aminoacyl-tRNA synthetase family. ValS type 1 subfamily. As to quaternary structure, monomer.

The protein resides in the cytoplasm. The catalysed reaction is tRNA(Val) + L-valine + ATP = L-valyl-tRNA(Val) + AMP + diphosphate. Catalyzes the attachment of valine to tRNA(Val). As ValRS can inadvertently accommodate and process structurally similar amino acids such as threonine, to avoid such errors, it has a 'posttransfer' editing activity that hydrolyzes mischarged Thr-tRNA(Val) in a tRNA-dependent manner. The chain is Valine--tRNA ligase from Streptococcus agalactiae serotype III (strain NEM316).